We begin with the raw amino-acid sequence, 145 residues long: D-aminoacyl-tRNA deacylase (145 aa).

The short motif at 137 to 138 is the Gly-cisPro motif, important for rejection of L-amino acids element; that stretch reads GP.

This sequence belongs to the DTD family. In terms of assembly, homodimer.

The protein localises to the cytoplasm. The enzyme catalyses glycyl-tRNA(Ala) + H2O = tRNA(Ala) + glycine + H(+). It carries out the reaction a D-aminoacyl-tRNA + H2O = a tRNA + a D-alpha-amino acid + H(+). Its function is as follows. An aminoacyl-tRNA editing enzyme that deacylates mischarged D-aminoacyl-tRNAs. Also deacylates mischarged glycyl-tRNA(Ala), protecting cells against glycine mischarging by AlaRS. Acts via tRNA-based rather than protein-based catalysis; rejects L-amino acids rather than detecting D-amino acids in the active site. By recycling D-aminoacyl-tRNA to D-amino acids and free tRNA molecules, this enzyme counteracts the toxicity associated with the formation of D-aminoacyl-tRNA entities in vivo and helps enforce protein L-homochirality. The protein is D-aminoacyl-tRNA deacylase of Shewanella oneidensis (strain ATCC 700550 / JCM 31522 / CIP 106686 / LMG 19005 / NCIMB 14063 / MR-1).